The chain runs to 233 residues: Purine nucleoside phosphorylase DeoD-type (233 aa).

A purine D-ribonucleoside is bound at residue His-4. Phosphate-binding positions include Gly-20, Arg-24, Arg-43, and Arg-87–Thr-90. A purine D-ribonucleoside contacts are provided by residues Glu-179–Glu-181 and Ser-203–Asp-204. Asp-204 serves as the catalytic Proton donor.

Belongs to the PNP/UDP phosphorylase family. Homohexamer; trimer of homodimers.

It catalyses the reaction a purine D-ribonucleoside + phosphate = a purine nucleobase + alpha-D-ribose 1-phosphate. The catalysed reaction is a purine 2'-deoxy-D-ribonucleoside + phosphate = a purine nucleobase + 2-deoxy-alpha-D-ribose 1-phosphate. Functionally, catalyzes the reversible phosphorolytic breakdown of the N-glycosidic bond in the beta-(deoxy)ribonucleoside molecules, with the formation of the corresponding free purine bases and pentose-1-phosphate. The sequence is that of Purine nucleoside phosphorylase DeoD-type from Helicobacter pylori (strain ATCC 700392 / 26695) (Campylobacter pylori).